Consider the following 162-residue polypeptide: NADH-quinone oxidoreductase subunit I 1 (162 aa).

2 4Fe-4S ferredoxin-type domains span residues 52-82 (LRRYPNGEERCIACKLCEAVCPAQAITIEAG) and 93-122 (VRYDIDMVKCIYCGFCQEACPVDAIVEGPN). [4Fe-4S] cluster is bound by residues Cys62, Cys65, Cys68, Cys72, Cys102, Cys105, Cys108, and Cys112.

Belongs to the complex I 23 kDa subunit family. NDH-1 is composed of 14 different subunits. Subunits NuoA, H, J, K, L, M, N constitute the membrane sector of the complex. It depends on [4Fe-4S] cluster as a cofactor.

It is found in the cell inner membrane. It catalyses the reaction a quinone + NADH + 5 H(+)(in) = a quinol + NAD(+) + 4 H(+)(out). In terms of biological role, NDH-1 shuttles electrons from NADH, via FMN and iron-sulfur (Fe-S) centers, to quinones in the respiratory chain. The immediate electron acceptor for the enzyme in this species is believed to be ubiquinone. Couples the redox reaction to proton translocation (for every two electrons transferred, four hydrogen ions are translocated across the cytoplasmic membrane), and thus conserves the redox energy in a proton gradient. In Rhodopseudomonas palustris (strain ATCC BAA-98 / CGA009), this protein is NADH-quinone oxidoreductase subunit I 1.